The primary structure comprises 101 residues: Apolipoprotein C-II (101 aa).

Residues 1 to 22 (MGTRFLLALFLVLLVLGFEVQG) form the signal peptide. The lipid binding stretch occupies residues 66–74 (AVDEKLRDM). The lipoprotein lipase cofactor stretch occupies residues 78–101 (STAAVSTYAGIFTDQVLSMLRGEE).

It belongs to the apolipoprotein C2 family. Post-translationally, proapolipoprotein C-II is synthesized as a sialic acid containing glycoprotein which is subsequently desialylated prior to its proteolytic processing. In terms of processing, proapolipoprotein C-II, the major form found in plasma undergoes proteolytic cleavage of its N-terminal hexapeptide to generate apolipoprotein C-II, which occurs as the minor form in plasma.

The protein resides in the secreted. Functionally, component of chylomicrons, very low-density lipoproteins (VLDL), low-density lipoproteins (LDL), and high-density lipoproteins (HDL) in plasma. Plays an important role in lipoprotein metabolism as an activator of lipoprotein lipase. Both proapolipoprotein C-II and apolipoprotein C-II can activate lipoprotein lipase. The protein is Apolipoprotein C-II (APOC2) of Saimiri boliviensis boliviensis (Bolivian squirrel monkey).